We begin with the raw amino-acid sequence, 202 residues long: Putative pituitary tumor-transforming gene 3 protein (202 aa).

The D-box signature appears at 61 to 64 (RKAL). An SH3-binding motif is present at residues 163 to 173 (PPSPLKMPSPP).

The protein belongs to the securin family.

It localises to the cytoplasm. The protein resides in the nucleus. The protein is Putative pituitary tumor-transforming gene 3 protein (PTTG3) of Pan troglodytes (Chimpanzee).